The chain runs to 962 residues: Glycine dehydrogenase (decarboxylating) (962 aa).

Position 709 is an N6-(pyridoxal phosphate)lysine (Lys-709).

Belongs to the GcvP family. In terms of assembly, the glycine cleavage system is composed of four proteins: P, T, L and H. Pyridoxal 5'-phosphate serves as cofactor.

It catalyses the reaction N(6)-[(R)-lipoyl]-L-lysyl-[glycine-cleavage complex H protein] + glycine + H(+) = N(6)-[(R)-S(8)-aminomethyldihydrolipoyl]-L-lysyl-[glycine-cleavage complex H protein] + CO2. Its function is as follows. The glycine cleavage system catalyzes the degradation of glycine. The P protein binds the alpha-amino group of glycine through its pyridoxal phosphate cofactor; CO(2) is released and the remaining methylamine moiety is then transferred to the lipoamide cofactor of the H protein. This Shewanella amazonensis (strain ATCC BAA-1098 / SB2B) protein is Glycine dehydrogenase (decarboxylating).